A 237-amino-acid chain; its full sequence is MDIKLKDFEGPLDLLLHLVSKYEVDIYDVPIVEVIEQYLAYLATLQAMKLEVAGEYMLMASQLMLIKSRKLLPTVVEDEPEVDDPELELLSQLEEYAHFKAASQVLAKKHEVRAQYFSKPKVELVYEDVTLNQDKTIQDIFLAFSKIMAEKQEEIRRRHTTIARDDYKIEDMMLIIEEAFSAKNKLFLDELFSDAKDMNQVITLFLATLELIKIHRISVQQETIFGTITLRKEWTNE.

This sequence belongs to the ScpA family. Component of a cohesin-like complex composed of ScpA, ScpB and the Smc homodimer, in which ScpA and ScpB bind to the head domain of Smc. The presence of the three proteins is required for the association of the complex with DNA.

The protein localises to the cytoplasm. Its function is as follows. Participates in chromosomal partition during cell division. May act via the formation of a condensin-like complex containing Smc and ScpB that pull DNA away from mid-cell into both cell halves. This chain is Segregation and condensation protein A, found in Streptococcus thermophilus (strain CNRZ 1066).